The chain runs to 94 residues: Protein translocase subunit SecE (94 aa).

The tract at residues Met-1–Lys-32 is disordered. Over residues Lys-22–Lys-32 the composition is skewed to basic residues. Residues Gln-59–Ile-81 form a helical membrane-spanning segment.

This sequence belongs to the SecE/SEC61-gamma family. Component of the Sec protein translocase complex. Heterotrimer consisting of SecY, SecE and SecG subunits. The heterotrimers can form oligomers, although 1 heterotrimer is thought to be able to translocate proteins. Interacts with the ribosome. Interacts with SecDF, and other proteins may be involved. Interacts with SecA.

It is found in the cell membrane. In terms of biological role, essential subunit of the Sec protein translocation channel SecYEG. Clamps together the 2 halves of SecY. May contact the channel plug during translocation. This chain is Protein translocase subunit SecE, found in Streptomyces galbus.